Reading from the N-terminus, the 305-residue chain is Acetaldehyde dehydrogenase (305 aa).

NAD(+) is bound at residue serine 13–isoleucine 16. Residue cysteine 128 is the Acyl-thioester intermediate of the active site. NAD(+)-binding positions include serine 159–asparagine 167 and asparagine 278.

This sequence belongs to the acetaldehyde dehydrogenase family.

The enzyme catalyses acetaldehyde + NAD(+) + CoA = acetyl-CoA + NADH + H(+). The sequence is that of Acetaldehyde dehydrogenase from Roseiflexus castenholzii (strain DSM 13941 / HLO8).